The chain runs to 93 residues: Small ribosomal subunit protein uS15 (93 aa).

This sequence belongs to the universal ribosomal protein uS15 family. In terms of assembly, part of the 30S ribosomal subunit. Forms a bridge to the 50S subunit in the 70S ribosome, contacting the 23S rRNA.

Functionally, one of the primary rRNA binding proteins, it binds directly to 16S rRNA where it helps nucleate assembly of the platform of the 30S subunit by binding and bridging several RNA helices of the 16S rRNA. In terms of biological role, forms an intersubunit bridge (bridge B4) with the 23S rRNA of the 50S subunit in the ribosome. This chain is Small ribosomal subunit protein uS15, found in Ehrlichia canis (strain Jake).